The chain runs to 318 residues: Ferrochelatase (318 aa).

Residues histidine 194 and glutamate 275 each coordinate Fe cation.

Belongs to the ferrochelatase family.

Its subcellular location is the cytoplasm. The catalysed reaction is heme b + 2 H(+) = protoporphyrin IX + Fe(2+). It functions in the pathway porphyrin-containing compound metabolism; protoheme biosynthesis; protoheme from protoporphyrin-IX: step 1/1. Catalyzes the ferrous insertion into protoporphyrin IX. The sequence is that of Ferrochelatase from Xanthomonas axonopodis pv. citri (strain 306).